The primary structure comprises 1345 residues: DNA-directed RNA polymerase subunit beta' (1345 aa).

4 residues coordinate Zn(2+): Cys60, Cys62, Cys75, and Cys78. Residues Asp536, Asp538, and Asp540 each coordinate Mg(2+). 4 residues coordinate Zn(2+): Cys895, Cys974, Cys981, and Cys984. A disordered region spans residues 1325 to 1345 (DDNDNPVDFGDEFRIDPDELK). Positions 1335-1345 (DEFRIDPDELK) are enriched in basic and acidic residues.

This sequence belongs to the RNA polymerase beta' chain family. The RNAP catalytic core consists of 2 alpha, 1 beta, 1 beta' and 1 omega subunit. When a sigma factor is associated with the core the holoenzyme is formed, which can initiate transcription. Mg(2+) serves as cofactor. The cofactor is Zn(2+).

The enzyme catalyses RNA(n) + a ribonucleoside 5'-triphosphate = RNA(n+1) + diphosphate. DNA-dependent RNA polymerase catalyzes the transcription of DNA into RNA using the four ribonucleoside triphosphates as substrates. This Bifidobacterium animalis subsp. lactis (strain AD011) protein is DNA-directed RNA polymerase subunit beta'.